The sequence spans 291 residues: MMTQSIGRSMLTVMATLPLLFSSATLHAQANSVQQQLEALEKSSGGRLGVALINTADNSQILYRADERFAMCSTSKVMAAAAVLKQSESDKHLLNQRVEIKKSDLVNYNPIAEKHVNGTMTLAELGAAALQYSDNTAMNKLIAHLGGPDKVTAFARSLGDETFRLDRTEPTLNTAIPGDPRDTTTPLAMAQTLKNLTLGKALAETQRAQLVTWLKGNTTGSASIRAGLPKSWVVGDKTGSGDYGTTNDIAVIWPENHAPLVLVTYFTQPEQKAESRRDILAAAAKIVTHGF.

An N-terminal signal peptide occupies residues 1 to 28 (MMTQSIGRSMLTVMATLPLLFSSATLHA). The active-site Acyl-ester intermediate is Ser-73. Position 237 to 239 (237 to 239 (KTG)) interacts with substrate.

The protein belongs to the class-A beta-lactamase family.

The catalysed reaction is a beta-lactam + H2O = a substituted beta-amino acid. Is probably capable of hydrolyzing cephalosporins such as ceftriaxone and ceftazidime, thus conferring resistance to these antibiotics. This chain is Beta-lactamase CTX-M-97 (bla), found in Escherichia coli.